Consider the following 360-residue polypeptide: MNAPLGGIWLGLPLLLTWLSPEVSSSWWYMRATGDSSRVMCDNVPGLVSRQRQLCHRHPDVMRAIGLGVAEWTAECQYQFRQHRWNCNTLDRDHGLFGRVLLRSSRESAFVYAISSAGVVFAITRACSQGELKSCSCDPKKKGTAKDSKGTFDWGGCSDNIDYGIKFARAFVDAKERKGKDARALMNLHNNRAGRKAVKRFLKQECKCHGVSGSCTLRTCWLAMADFRKTGDYLWRKYNGAIQVVMNQDGTGFTVANKRFKKPTKNDLVYFENSPDYCIRDREAGSPGTAGRVCNLTSRGMDSCEVMCCGRGYDTSRVTRMTKCECKFHWCCAVRCQDCLEALDVHTCKAPKSADWTTPT.

An N-terminal signal peptide occupies residues 1-25 (MNAPLGGIWLGLPLLLTWLSPEVSS). 11 cysteine pairs are disulfide-bonded: cysteine 76-cysteine 87, cysteine 127-cysteine 135, cysteine 137-cysteine 157, cysteine 206-cysteine 220, cysteine 208-cysteine 215, cysteine 278-cysteine 309, cysteine 294-cysteine 304, cysteine 308-cysteine 348, cysteine 324-cysteine 339, cysteine 326-cysteine 336, and cysteine 331-cysteine 332. A lipid anchor (O-palmitoleoyl serine; by PORCN) is attached at serine 212. Residue asparagine 295 is glycosylated (N-linked (GlcNAc...) asparagine).

The protein belongs to the Wnt family. Palmitoleoylation is required for efficient binding to frizzled receptors. Depalmitoleoylation leads to Wnt signaling pathway inhibition.

It localises to the secreted. Its subcellular location is the extracellular space. The protein localises to the extracellular matrix. Ligand for members of the frizzled family of seven transmembrane receptors. Probable developmental protein. May be a signaling molecule which affects the development of discrete regions of tissues. Is likely to signal over only few cell diameters. In Oryctolagus cuniculus (Rabbit), this protein is Protein Wnt-2 (WNT2).